A 149-amino-acid polypeptide reads, in one-letter code: Ribonuclease H (149 aa).

Residues 5–146 form the RNase H type-1 domain; the sequence is QRPHVVIFTD…ADELAREGLA (142 aa). Mg(2+) is bound by residues Asp14, Glu52, Asp74, and Asp138.

It belongs to the RNase H family. Monomer. It depends on Mg(2+) as a cofactor.

The protein resides in the cytoplasm. The enzyme catalyses Endonucleolytic cleavage to 5'-phosphomonoester.. Its function is as follows. Endonuclease that specifically degrades the RNA of RNA-DNA hybrids. The chain is Ribonuclease H from Afipia carboxidovorans (strain ATCC 49405 / DSM 1227 / KCTC 32145 / OM5) (Oligotropha carboxidovorans).